Reading from the N-terminus, the 318-residue chain is Probable cell division protein WhiA (318 aa).

Residues 281–314 (SLKELGEMLSPPVGKSGVNHRLRRIEKIAEELSK) constitute a DNA-binding region (H-T-H motif).

The protein belongs to the WhiA family.

In terms of biological role, involved in cell division and chromosome segregation. This chain is Probable cell division protein WhiA, found in Clostridium tetani (strain Massachusetts / E88).